A 42-amino-acid polypeptide reads, in one-letter code: Photosystem I reaction center subunit IX (42 aa).

The chain crosses the membrane as a helical span at residues 7–27; the sequence is YLSTAPVLATLWFGFLAGLLI.

The protein belongs to the PsaJ family.

The protein localises to the plastid. It is found in the chloroplast thylakoid membrane. Functionally, may help in the organization of the PsaE and PsaF subunits. In Psilotum nudum (Whisk fern), this protein is Photosystem I reaction center subunit IX.